A 161-amino-acid polypeptide reads, in one-letter code: Ribonuclease P protein component 2 (161 aa).

It belongs to the eukaryotic/archaeal RNase P protein component 2 family. In terms of assembly, consists of a catalytic RNA component and at least 4-5 protein subunits.

The protein localises to the cytoplasm. It carries out the reaction Endonucleolytic cleavage of RNA, removing 5'-extranucleotides from tRNA precursor.. Part of ribonuclease P, a protein complex that generates mature tRNA molecules by cleaving their 5'-ends. The sequence is that of Ribonuclease P protein component 2 from Haloarcula marismortui (strain ATCC 43049 / DSM 3752 / JCM 8966 / VKM B-1809) (Halobacterium marismortui).